We begin with the raw amino-acid sequence, 999 residues long: RING finger domain and kelch repeat-containing protein DDB_G0271372 (999 aa).

Residues 7-49 (CPNCLKVFNNPRQLECDHILCTRCIEGVYNPGRTPIIKCPVCD) form an RING-type zinc finger. A compositionally biased stretch (low complexity) spans 92–143 (STGSSNNNNNNNNNNNNNNNNFVINNSNNKNNGATTTTTTTTTTTNSNSNST). 2 disordered regions span residues 92 to 147 (STGS…KSKV) and 159 to 209 (ASPK…SSPP). The segment covering 165–196 (GSSQGSLTTINNQKKLTLSPQRASSTTTTSVN) has biased composition (polar residues). The B box-type zinc-finger motif lies at 258–302 (AELSKCNDHDQKKFTIFCTDCDQLLCDECLNNNQQQHENHQLNKI). Zn(2+)-binding residues include Cys-263, His-266, Cys-286, and His-294. A coiled-coil region spans residues 355 to 402 (DIDTMIENLKERKNALISQIDKEYEEQKLELKDQIETINTTIVDIQNN). 2 stretches are compositionally biased toward low complexity: residues 485-516 (GVSS…IITT) and 526-536 (SPSPTSSSSST). The segment at 485–637 (GVSSSPTGTG…TSTNGSNTKI (153 aa)) is disordered. The span at 552–612 (LSSQNYDNFG…SHGSKLNDNI (61 aa)) shows a compositional bias: polar residues. The span at 613–635 (NTNNNNSPSPTSSSTTSTNGSNT) shows a compositional bias: low complexity. 5 Kelch repeats span residues 655–700 (ITAR…YDNN), 702–745 (TIYR…VFDG), 748–793 (YIYL…YHPT), 796–842 (CIYV…FDGS), and 844–892 (YINI…SMNL). Over residues 904–924 (NSFSSISSHSSLNSSSSNNGI) the composition is skewed to low complexity. Positions 904–936 (NSFSSISSHSSLNSSSSNNGISGSGGSGGDNEI) are disordered.

This Dictyostelium discoideum (Social amoeba) protein is RING finger domain and kelch repeat-containing protein DDB_G0271372.